The chain runs to 112 residues: UPF0102 protein Cla_1413 (112 aa).

It belongs to the UPF0102 family.

The chain is UPF0102 protein Cla_1413 from Campylobacter lari (strain RM2100 / D67 / ATCC BAA-1060).